A 323-amino-acid chain; its full sequence is ATP synthase gamma chain (323 aa).

It belongs to the ATPase gamma chain family. In terms of assembly, F-type ATPases have 2 components, CF(1) - the catalytic core - and CF(0) - the membrane proton channel. CF(1) has five subunits: alpha(3), beta(3), gamma(1), delta(1), epsilon(1). CF(0) has three main subunits: a, b and c.

It is found in the cell inner membrane. Functionally, produces ATP from ADP in the presence of a proton gradient across the membrane. The gamma chain is believed to be important in regulating ATPase activity and the flow of protons through the CF(0) complex. This is ATP synthase gamma chain from Rickettsia peacockii (strain Rustic).